Here is a 442-residue protein sequence, read N- to C-terminus: F-box protein KIB2 (442 aa).

In terms of domain architecture, F-box spans 62-109; sequence SKQPVLVLDLLRSILERLSFVDFHRGRCISLEWYSASESCLAVKNPTS. Positions 236–243 match the Nuclear localization signal motif; sequence HKKGDENY.

In terms of assembly, interacts with ASK7/BIN2/SK21.

It localises to the cytoplasm. Its subcellular location is the nucleus. It is found in the nucleolus. Component of SCF(ASK-cullin-F-box) E3 ubiquitin ligase complexes, which may mediate the ubiquitination and subsequent proteasomal degradation of target proteins. Required for brassinosteroid (BR) signal transduction. Mediates ASK7/BIN2/SK21 inactivation both by competing with substrate binding (e.g. BZR1) and by promoting its ubiquitination and subsequent proteasomal degradation. The polypeptide is F-box protein KIB2 (Arabidopsis thaliana (Mouse-ear cress)).